A 303-amino-acid polypeptide reads, in one-letter code: MIKQRTLKNIIRATGVGLHSGEKVYLTLKPAPVDTGIVFCRTDLDPVVEIPARAENVGETTMSTTLVKGDVKVDTVEHLLSAMAGLGIDNAYVELSASEVPIMDGSAGPFVFLIQSAGLQEQEAAKKFIRIKREVSVEEGDKRAVFVPFDGFKVSFEIDFDHPVFRGRTQQASVDFSSTSFVKEVSRARTFGFMRDIEYLRSQNLALGGSVENAIVVDENRVLNEDGLRYEDEFVKHKILDAIGDLYLLGNSLIGEFRGFKSGHALNNQLLRSLIADRDAWEVVTFEDARTAPISYMRPAAAV.

Positions 78, 237, and 241 each coordinate Zn(2+). His264 (proton donor) is an active-site residue.

The protein belongs to the LpxC family. Requires Zn(2+) as cofactor.

It catalyses the reaction a UDP-3-O-[(3R)-3-hydroxyacyl]-N-acetyl-alpha-D-glucosamine + H2O = a UDP-3-O-[(3R)-3-hydroxyacyl]-alpha-D-glucosamine + acetate. It participates in glycolipid biosynthesis; lipid IV(A) biosynthesis; lipid IV(A) from (3R)-3-hydroxytetradecanoyl-[acyl-carrier-protein] and UDP-N-acetyl-alpha-D-glucosamine: step 2/6. Catalyzes the hydrolysis of UDP-3-O-myristoyl-N-acetylglucosamine to form UDP-3-O-myristoylglucosamine and acetate, the committed step in lipid A biosynthesis. The protein is UDP-3-O-acyl-N-acetylglucosamine deacetylase of Pseudomonas paraeruginosa (strain DSM 24068 / PA7) (Pseudomonas aeruginosa (strain PA7)).